The sequence spans 96 residues: uncharacterized protein (96 aa).

This is an uncharacterized protein from Saccharomyces cerevisiae (strain ATCC 204508 / S288c) (Baker's yeast).